The sequence spans 205 residues: Ephrin-A1 (205 aa).

Residues 1 to 18 form the signal peptide; the sequence is MEFLWAPLLGLCCSLAAA. The Ephrin RBD domain maps to 19–151; sequence DRHTVFWNSS…KLKVTVSGKI (133 aa). N-linked (GlcNAc...) asparagine glycosylation occurs at Asn26. 2 cysteine pairs are disulfide-bonded: Cys51/Cys92 and Cys80/Cys140. Ser182 carries GPI-anchor amidated serine lipidation. The propeptide at 183 to 205 is removed in mature form; it reads AAPRLSPLAWAVLLLPFLLLQTS.

The protein belongs to the ephrin family. Monomer. Homodimer. Forms heterodimers with EPHA2. Binds to the receptor tyrosine kinases EPHA2, EPHA3, EPHA4, EPHA5, EPHA6 and EPHA7. Also binds with low affinity to EPHA1. Post-translationally, undergoes proteolysis by a metalloprotease to give rise to a soluble monomeric form. In terms of processing, N-Glycosylation is required for binding to EPHA2 receptor and inducing its internalization.

Its subcellular location is the cell membrane. The protein resides in the secreted. Its function is as follows. Cell surface GPI-bound ligand for Eph receptors, a family of receptor tyrosine kinases which are crucial for migration, repulsion and adhesion during neuronal, vascular and epithelial development. Binds promiscuously Eph receptors residing on adjacent cells, leading to contact-dependent bidirectional signaling into neighboring cells. Plays an important role in angiogenesis and tumor neovascularization. The recruitment of VAV2, VAV3 and PI3-kinase p85 subunit by phosphorylated EPHA2 is critical for EFNA1-induced RAC1 GTPase activation and vascular endothelial cell migration and assembly. Exerts anti-oncogenic effects in tumor cells through activation and down-regulation of EPHA2. Activates EPHA2 by inducing tyrosine phosphorylation which leads to its internalization and degradation. Acts as a negative regulator in the tumorigenesis of gliomas by down-regulating EPHA2 and FAK. Can evoke collapse of embryonic neuronal growth cone and regulates dendritic spine morphogenesis. In Sus scrofa (Pig), this protein is Ephrin-A1 (EFNA1).